Here is a 54-residue protein sequence, read N- to C-terminus: Ribulose bisphosphate carboxylase large chain (54 aa).

Residues 1 to 2 (MS) constitute a propeptide that is removed on maturation. Residue Pro3 is modified to N-acetylproline. The residue at position 14 (Lys14) is an N6,N6,N6-trimethyllysine.

Belongs to the RuBisCO large chain family. Type I subfamily. Heterohexadecamer of 8 large chains and 8 small chains.

The protein resides in the plastid. It localises to the chloroplast. The catalysed reaction is 2 (2R)-3-phosphoglycerate + 2 H(+) = D-ribulose 1,5-bisphosphate + CO2 + H2O. It catalyses the reaction D-ribulose 1,5-bisphosphate + O2 = 2-phosphoglycolate + (2R)-3-phosphoglycerate + 2 H(+). In terms of biological role, ruBisCO catalyzes two reactions: the carboxylation of D-ribulose 1,5-bisphosphate, the primary event in carbon dioxide fixation, as well as the oxidative fragmentation of the pentose substrate in the photorespiration process. Both reactions occur simultaneously and in competition at the same active site. The chain is Ribulose bisphosphate carboxylase large chain (rbcL) from Icacina mannii.